The sequence spans 344 residues: G-protein coupled receptor str-217 (344 aa).

Residues 1 to 10 (MLLFQKTLSR) are Extracellular-facing. A helical membrane pass occupies residues 11–31 (VAAPISVAANLILILLIIFKS). The Cytoplasmic portion of the chain corresponds to 32 to 39 (PAQMGNYK). The chain crosses the membrane as a helical span at residues 40 to 60 (YLLIGLSIFEMSYAVLDVVSE). The Extracellular segment spans residues 61 to 88 (TTVLSIKKSFVVVVPYKDRSFGQETAMD). The chain crosses the membrane as a helical span at residues 89 to 109 (INLIYCGFFGFSMGMFVVIFA). The Cytoplasmic portion of the chain corresponds to 110 to 128 (YRSFLTTGNTILRKFEGFK). The chain crosses the membrane as a helical span at residues 129–149 (IISWFAYPLFYAIVWILVAWG). The Extracellular portion of the chain corresponds to 150–195 (PLASFPEMDIVVRPFLLDELNMTVDEVAYTGRLFYSTIDNSLRYSA). Residue Asn170 is glycosylated (N-linked (GlcNAc...) asparagine). The chain crosses the membrane as a helical span at residues 196 to 216 (ILTGVLQWVLTASSLFLVIFF). Over 217–256 (GLRCYFHYGKLVQLTDVQSIRLRQLQNQLFLALVCQATVP) the chain is Cytoplasmic. The helical transmembrane segment at 257-277 (LILMHIPVTILYTCCVLNIVF) threads the bilayer. Over 278–279 (NP) the chain is Extracellular. A helical transmembrane segment spans residues 280–300 (FSVATTIALFPAIDPLPTIFI). Topologically, residues 301–344 (VKNYRVALFEFVCPSCLCWSETLKHMGSNRITSYRSNTVNALSM) are cytoplasmic.

The protein belongs to the nematode receptor-like protein str family. In terms of tissue distribution, expressed in the ADL chemosensory neurons.

The protein localises to the cell membrane. In terms of biological role, probable G-protein coupled receptor. The polypeptide is G-protein coupled receptor str-217 (Caenorhabditis elegans).